The sequence spans 133 residues: ATP synthase epsilon chain, chloroplastic (133 aa).

This sequence belongs to the ATPase epsilon chain family. F-type ATPases have 2 components, CF(1) - the catalytic core - and CF(0) - the membrane proton channel. CF(1) has five subunits: alpha(3), beta(3), gamma(1), delta(1), epsilon(1). CF(0) has three main subunits: a, b and c.

It localises to the plastid. The protein resides in the chloroplast thylakoid membrane. Its function is as follows. Produces ATP from ADP in the presence of a proton gradient across the membrane. The polypeptide is ATP synthase epsilon chain, chloroplastic (Jasminum nudiflorum (Winter jasmine)).